A 440-amino-acid polypeptide reads, in one-letter code: Glutamate--tRNA ligase 2 (440 aa).

The 'HIGH' region signature appears at 8–18 (PSPTGYLHVGN). Residues 239-243 (ALSKR) carry the 'KMSKS' region motif. Lysine 242 provides a ligand contact to ATP.

The protein belongs to the class-I aminoacyl-tRNA synthetase family. Glutamate--tRNA ligase type 1 subfamily. As to quaternary structure, monomer.

It is found in the cytoplasm. It carries out the reaction tRNA(Glu) + L-glutamate + ATP = L-glutamyl-tRNA(Glu) + AMP + diphosphate. Catalyzes the attachment of glutamate to tRNA(Glu) in a two-step reaction: glutamate is first activated by ATP to form Glu-AMP and then transferred to the acceptor end of tRNA(Glu). The chain is Glutamate--tRNA ligase 2 from Dinoroseobacter shibae (strain DSM 16493 / NCIMB 14021 / DFL 12).